A 321-amino-acid chain; its full sequence is NADH-ubiquinone oxidoreductase chain 1 (321 aa).

8 helical membrane passes run 6–26 (IVPPALLIISILMAVAFLTAL), 67–87 (LLATPTLFILAPTAALMLALA), 103–123 (LGLLLLLAMSSLMVYSFLWSG), 143–163 (ISYEVTLAIIVLSIVLLSGGF), 174–194 (PLYLALATWPSMMMWYTSTLA), 220–240 (ASPFALFFLAEYANIMLMNTL), 256–276 (ALFTIALMSKALLLTMSFLWV), and 296–316 (FLPMTLTLCLWHSSVPMSMFG).

Belongs to the complex I subunit 1 family.

It localises to the mitochondrion inner membrane. It catalyses the reaction a ubiquinone + NADH + 5 H(+)(in) = a ubiquinol + NAD(+) + 4 H(+)(out). In terms of biological role, core subunit of the mitochondrial membrane respiratory chain NADH dehydrogenase (Complex I) that is believed to belong to the minimal assembly required for catalysis. Complex I functions in the transfer of electrons from NADH to the respiratory chain. The immediate electron acceptor for the enzyme is believed to be ubiquinone. This chain is NADH-ubiquinone oxidoreductase chain 1 (MT-ND1), found in Alligator mississippiensis (American alligator).